The sequence spans 261 residues: Calbindin (261 aa).

A2 is subject to N-acetylalanine. The interaction with RANBP9 stretch occupies residues 2 to 7; that stretch reads AESHLQ. 5 consecutive EF-hand domains span residues 11–46, 53–88, 98–133, 142–177, and 186–221; these read ITAS…LLQA, ELSP…EENF, KSCE…LLEK, KLAE…QENF, and MCGK…LCEK. Ca(2+) is bound by residues D24, D26, S28, Y30, and E35. Ca(2+) is bound by residues D111, D113, S115, E122, D155, N157, D159, K161, E166, D199, D201, N203, Y205, and E210.

Belongs to the calbindin family. Interacts with RANBP9. As to expression, expressed in the modiolar nerve root and in bushy neurons in the ventral cochlear nucleus (at protein level).

Its function is as follows. Buffers cytosolic calcium. May stimulate a membrane Ca(2+)-ATPase and a 3',5'-cyclic nucleotide phosphodiesterase. The protein is Calbindin (Calb1) of Mus musculus (Mouse).